Here is a 612-residue protein sequence, read N- to C-terminus: Heparan-sulfate 6-O-sulfotransferase 2 (612 aa).

Topologically, residues Met-1–Pro-4 are cytoplasmic. Residues Ala-5 to Cys-27 form a helical; Signal-anchor for type II membrane protein membrane-spanning segment. Residues Arg-9–Ala-52 are disordered. Topologically, residues Pro-28–Arg-612 are lumenal. The N-linked (GlcNAc...) asparagine glycan is linked to Asn-209. His-233–Thr-241 contributes to the 3'-phosphoadenylyl sulfate binding site. Substrate-binding positions include Lys-263–Lys-264, Arg-280, Trp-285, and His-290. The active-site Proton acceptor is His-290. Arg-325 and Ser-333 together coordinate 3'-phosphoadenylyl sulfate. Residues His-337 and Trp-344 each contribute to the substrate site. An N-linked (GlcNAc...) asparagine glycan is attached at Asn-404. Position 457–459 (Thr-457–Tyr-459) interacts with 3'-phosphoadenylyl sulfate. Asn-460 is a glycosylation site (N-linked (GlcNAc...) asparagine). Arg-463–Ala-464 lines the 3'-phosphoadenylyl sulfate pocket. The segment at His-529–Arg-612 is disordered. Residues Gln-531–Ser-564 are compositionally biased toward low complexity. Asn-546, Asn-558, Asn-562, Asn-574, and Asn-599 each carry an N-linked (GlcNAc...) asparagine glycan. Over residues His-565–Gln-577 the composition is skewed to polar residues.

The protein belongs to the sulfotransferase 6 family.

The protein resides in the membrane. The catalysed reaction is alpha-D-glucosaminyl-[heparan sulfate](n) + 3'-phosphoadenylyl sulfate = 6-sulfo-alpha-D-glucosaminyl-[heparan sulfate](n) + adenosine 3',5'-bisphosphate + H(+). 6-O-sulfation enzyme which catalyzes the transfer of sulfate from 3'-phosphoadenosine 5'-phosphosulfate (PAPS) to position 6 of the N-sulfoglucosamine residue (GlcNS) of heparan sulfate. This Mus musculus (Mouse) protein is Heparan-sulfate 6-O-sulfotransferase 2 (Hs6st2).